An 89-amino-acid polypeptide reads, in one-letter code: Small ribosomal subunit protein uS17A (89 aa).

Belongs to the universal ribosomal protein uS17 family. Part of the 30S ribosomal subunit.

One of the primary rRNA binding proteins, it binds specifically to the 5'-end of 16S ribosomal RNA. The protein is Small ribosomal subunit protein uS17A of Bacteroides thetaiotaomicron (strain ATCC 29148 / DSM 2079 / JCM 5827 / CCUG 10774 / NCTC 10582 / VPI-5482 / E50).